Reading from the N-terminus, the 361-residue chain is 1-deoxy-D-xylulose 5-phosphate reductoisomerase (361 aa).

6 residues coordinate NADPH: threonine 12, glycine 13, serine 14, isoleucine 15, glycine 38, and asparagine 102. Position 103 (lysine 103) interacts with 1-deoxy-D-xylulose 5-phosphate. Glutamate 104 contacts NADPH. Aspartate 126 provides a ligand contact to Mn(2+). 1-deoxy-D-xylulose 5-phosphate-binding residues include serine 127, glutamate 128, serine 152, and histidine 175. Position 128 (glutamate 128) interacts with Mn(2+). Residue glycine 181 coordinates NADPH. 1-deoxy-D-xylulose 5-phosphate contacts are provided by serine 188, asparagine 193, lysine 194, and glutamate 197. Glutamate 197 contributes to the Mn(2+) binding site.

It belongs to the DXR family. Mg(2+) is required as a cofactor. The cofactor is Mn(2+).

It catalyses the reaction 2-C-methyl-D-erythritol 4-phosphate + NADP(+) = 1-deoxy-D-xylulose 5-phosphate + NADPH + H(+). It functions in the pathway isoprenoid biosynthesis; isopentenyl diphosphate biosynthesis via DXP pathway; isopentenyl diphosphate from 1-deoxy-D-xylulose 5-phosphate: step 1/6. Its function is as follows. Catalyzes the NADPH-dependent rearrangement and reduction of 1-deoxy-D-xylulose-5-phosphate (DXP) to 2-C-methyl-D-erythritol 4-phosphate (MEP). This Leifsonia xyli subsp. xyli (strain CTCB07) protein is 1-deoxy-D-xylulose 5-phosphate reductoisomerase.